The sequence spans 446 residues: tRNA modification GTPase MnmE (446 aa).

(6S)-5-formyl-5,6,7,8-tetrahydrofolate-binding residues include arginine 22, glutamate 80, and lysine 119. Residues 215–370 (GLSLVIAGRP…LKKVIKQVVG (156 aa)) form the TrmE-type G domain. Asparagine 225 is a binding site for K(+). Residues 225–230 (NAGKST), 244–250 (TEIAGTT), and 269–272 (DTAG) contribute to the GTP site. Serine 229 contacts Mg(2+). K(+) contacts are provided by threonine 244, isoleucine 246, and threonine 249. Threonine 250 provides a ligand contact to Mg(2+). Lysine 446 lines the (6S)-5-formyl-5,6,7,8-tetrahydrofolate pocket.

The protein belongs to the TRAFAC class TrmE-Era-EngA-EngB-Septin-like GTPase superfamily. TrmE GTPase family. In terms of assembly, homodimer. Heterotetramer of two MnmE and two MnmG subunits. The cofactor is K(+).

The protein localises to the cytoplasm. Exhibits a very high intrinsic GTPase hydrolysis rate. Involved in the addition of a carboxymethylaminomethyl (cmnm) group at the wobble position (U34) of certain tRNAs, forming tRNA-cmnm(5)s(2)U34. In Legionella pneumophila subsp. pneumophila (strain Philadelphia 1 / ATCC 33152 / DSM 7513), this protein is tRNA modification GTPase MnmE.